The following is a 362-amino-acid chain: Thiol protease aleurain (362 aa).

A signal peptide spans 1-22; the sequence is MAHARVLLLALAVLATAAVAVA. Positions 23–143 are cleaved as a propeptide — activation peptide; it reads SSSSFADSNP…GNHLMRDAAA (121 aa). Disulfide bonds link Cys165–Cys208 and Cys199–Cys241. Residue Cys168 is part of the active site. The N-linked (GlcNAc...) asparagine glycan is linked to Asn188. A glycan (N-linked (GlcNAc...) asparagine) is linked at Asn257. The cysteines at positions 299 and 349 are disulfide-linked. Catalysis depends on residues His308 and Asn328.

The protein belongs to the peptidase C1 family.

It localises to the vacuole. The enzyme catalyses Hydrolysis of proteins, acting as an aminopeptidase (notably, cleaving Arg-|-Xaa bonds) as well as an endopeptidase.. May play a role in proteolysis leading to mobilization of nitrogen during senescence and starvation. The chain is Thiol protease aleurain from Hordeum vulgare (Barley).